The following is a 628-amino-acid chain: 1,4-alpha-glucan branching enzyme GlgB (628 aa).

The active-site Nucleophile is Asp-304. Glu-355 acts as the Proton donor in catalysis.

This sequence belongs to the glycosyl hydrolase 13 family. GlgB subfamily. Monomer.

The catalysed reaction is Transfers a segment of a (1-&gt;4)-alpha-D-glucan chain to a primary hydroxy group in a similar glucan chain.. It participates in glycan biosynthesis; glycogen biosynthesis. Its function is as follows. Catalyzes the formation of the alpha-1,6-glucosidic linkages in glycogen by scission of a 1,4-alpha-linked oligosaccharide from growing alpha-1,4-glucan chains and the subsequent attachment of the oligosaccharide to the alpha-1,6 position. This chain is 1,4-alpha-glucan branching enzyme GlgB, found in Streptococcus mutans serotype c (strain ATCC 700610 / UA159).